The primary structure comprises 121 residues: Aspartate 1-decarboxylase (121 aa).

The Schiff-base intermediate with substrate; via pyruvic acid role is filled by S25. S25 is subject to Pyruvic acid (Ser). T57 provides a ligand contact to substrate. The Proton donor role is filled by Y58. A substrate-binding site is contributed by 73–75; it reads GAA.

The protein belongs to the PanD family. As to quaternary structure, heterooctamer of four alpha and four beta subunits. It depends on pyruvate as a cofactor. Post-translationally, is synthesized initially as an inactive proenzyme, which is activated by self-cleavage at a specific serine bond to produce a beta-subunit with a hydroxyl group at its C-terminus and an alpha-subunit with a pyruvoyl group at its N-terminus.

The protein localises to the cytoplasm. It carries out the reaction L-aspartate + H(+) = beta-alanine + CO2. Its pathway is cofactor biosynthesis; (R)-pantothenate biosynthesis; beta-alanine from L-aspartate: step 1/1. Functionally, catalyzes the pyruvoyl-dependent decarboxylation of aspartate to produce beta-alanine. The sequence is that of Aspartate 1-decarboxylase from Maricaulis maris (strain MCS10) (Caulobacter maris).